The sequence spans 389 residues: Mitochondrial carrier homolog 1 (389 aa).

The disordered stretch occupies residues 1–78 (MGASDPEVAP…PGAPGSGDNA (78 aa)). Topologically, residues 1–93 (MGASDPEVAP…LFVALGAGVT (93 aa)) are mitochondrial intermembrane. Positions 15–33 (GAAGMAGAGAGAGARGGAP) are enriched in gly residues. Arginine 29 carries the post-translational modification Omega-N-methylarginine. Solcar repeat units follow at residues 81–176 (TEAL…FPPD) and 192–280 (KKVV…INAY). A helical transmembrane segment spans residues 94 to 104 (ALSHPLLYVKL). At 105–155 (LIQVGHEPMPPTLGTNVLGRKVLYLPSFFTYAKYIVQVDGKIGLFRGLSPR) the chain is on the cytoplasmic side. The helical transmembrane segment at 156–176 (LMSNALSTVTRGSMKKVFPPD) threads the bilayer. Topologically, residues 177–209 (EMEQVSNKDDMKTSLKKVVKETSYEMMMQCVSR) are mitochondrial intermembrane. The helical transmembrane segment at 210–229 (MLAHPLHVISMRCMVQFVGR) threads the bilayer. The Cytoplasmic segment spans residues 230–254 (EAKYSGVLSSIGKIFKEEGLLGFFV). A helical membrane pass occupies residues 255 to 279 (GLIPHLLGDVVFLWGCNLLAHFINA). At 280–322 (YLVDDSVSDTPGGLGNDQNPGSQFSQALAIRSYTKFVMGIAVS) the chain is on the mitochondrial intermembrane side. Residues 323–342 (MLTYPFLLVGDLMAVNNCGL) traverse the membrane as a helical segment. Residues 343-371 (RAGLPPYSPVFKSWIHCWKYLSVQGQLFR) are Cytoplasmic-facing. The chain crosses the membrane as a helical span at residues 372 to 389 (GSSLLFRRVSSGSCFALE).

This sequence belongs to the mitochondrial carrier (TC 2.A.29) family. As to quaternary structure, interacts with PSEN1.

It is found in the mitochondrion outer membrane. In terms of biological role, protein insertase that mediates insertion of transmembrane proteins into the mitochondrial outer membrane. Catalyzes insertion of proteins with alpha-helical transmembrane regions, such as signal-anchored, tail-anchored and multi-pass membrane proteins. Does not mediate insertion of beta-barrel transmembrane proteins. May play a role in apoptosis. The polypeptide is Mitochondrial carrier homolog 1 (Mtch1) (Mus musculus (Mouse)).